The sequence spans 662 residues: Acyl-coenzyme A oxidase acox-1.4 (662 aa).

FAD-binding positions include 148–151, 156–157, and Gly190; these read YAQT and GT. Substrate is bound by residues 284–287 and Arg294; that span reads KVNH. FAD is bound by residues Arg319 and 339–342; that span reads QQHR. ATP-binding residues include His341, Ser391, His395, and Gln403. Gly410 contributes to the FAD binding site. A substrate-binding site is contributed by 432-433; it reads YE. Glu433 functions as the Proton acceptor in the catalytic mechanism. Glu435 is a binding site for FAD. ATP is bound by residues 526 to 529 and Tyr574; that span reads RASR. A Microbody targeting signal motif is present at residues 660–662; that stretch reads AKL.

The protein belongs to the acyl-CoA oxidase family. Homodimer. The cofactor is FAD.

It is found in the peroxisome. It catalyses the reaction asc-C9-CoA + O2 = asc-DeltaC9-CoA + H2O2. Its pathway is lipid metabolism; peroxisomal fatty acid beta-oxidation. With respect to regulation, activated by ATP. ATP binding leads to a conformational change that promotes FAD cofactor binding and enzyme activity. ATP binding likely occurs during acox-1.4 folding and/or dimer formation. Functionally, involved in the first step of peroxisomal beta-oxidation by catalyzing the desaturation of fatty acid-derived side chains of ascaroside pheromones, which regulates development and behavior. Specifically, shortens ascarosides with a 9-carbon side chain (asc-C9) and, in association with acox-1.1, may contribute to the shortening of ascarosides with a 11-carbon side chain (asc-C11). May contribute to the production of indol-3-carbonyl(IC)-ascarosides in association with acox-1.1 and acox-3. In Caenorhabditis elegans, this protein is Acyl-coenzyme A oxidase acox-1.4.